The chain runs to 500 residues: Probable malate:quinone oxidoreductase (500 aa).

Belongs to the MQO family. FAD is required as a cofactor.

It catalyses the reaction (S)-malate + a quinone = a quinol + oxaloacetate. It functions in the pathway carbohydrate metabolism; tricarboxylic acid cycle; oxaloacetate from (S)-malate (quinone route): step 1/1. In Bacillus mycoides (strain KBAB4) (Bacillus weihenstephanensis), this protein is Probable malate:quinone oxidoreductase.